Here is a 66-residue protein sequence, read N- to C-terminus: Large ribosomal subunit protein bL35 (66 aa).

The segment covering 1 to 16 (MPKQKTHRASAKRFKR) has biased composition (basic residues). A disordered region spans residues 1-21 (MPKQKTHRASAKRFKRTGSGG).

It belongs to the bacterial ribosomal protein bL35 family.

The sequence is that of Large ribosomal subunit protein bL35 from Streptococcus sanguinis (strain SK36).